A 701-amino-acid polypeptide reads, in one-letter code: Ubiquitin thioesterase zranb1-B (701 aa).

3 consecutive RanBP2-type zinc fingers follow at residues Glu3 to Ser33, Thr79 to Thr108, and Ile143 to Asn173. Positions 10, 13, 24, 27, 85, 88, 99, and 102 each coordinate Zn(2+). Polar residues predominate over residues Thr108 to Gly121. The tract at residues Thr108–Ile129 is disordered. Zn(2+) is bound by residues Cys150, Cys153, Cys164, and Cys167. Residues Arg197 to Asp220 are disordered. Polar residues predominate over residues Cys202 to Thr214. 2 ANK repeats span residues Arg253 to Asp283 and Tyr306 to Ala333. The OTU domain occupies Leu425–Met585. Cys436 (nucleophile) is an active-site residue. His578 acts as the Proton acceptor in catalysis.

Belongs to the peptidase C64 family.

The protein resides in the cytoplasm. Its subcellular location is the nucleus. It catalyses the reaction Thiol-dependent hydrolysis of ester, thioester, amide, peptide and isopeptide bonds formed by the C-terminal Gly of ubiquitin (a 76-residue protein attached to proteins as an intracellular targeting signal).. Functionally, ubiquitin thioesterase, which specifically hydrolyzes 'Lys-29'-linked and 'Lys-33'-linked diubiquitin. Also cleaves 'Lys-63'-linked chains, but with 40-fold less efficiency compared to 'Lys-29'-linked ones. Positive regulator of the Wnt signaling pathway that deubiquitinates apc protein, a negative regulator of Wnt-mediated transcription. Acts as a regulator of autophagy by mediating deubiquitination of pik3c3/vps34, thereby promoting autophagosome maturation. Plays a role in the regulation of cell morphology and cytoskeletal organization. Required in the stress fiber dynamics and cell migration. The sequence is that of Ubiquitin thioesterase zranb1-B (zranb1-b) from Xenopus laevis (African clawed frog).